The primary structure comprises 326 residues: Putative ribose-phosphate pyrophosphokinase 2 (326 aa).

Residues 43 to 45 and 102 to 103 each bind ATP; these read DGE and RQ. His-136 serves as a coordination point for Mg(2+). D-ribose 5-phosphate is bound by residues Asp-225 and 229 to 233; that span reads NTGKT.

It belongs to the ribose-phosphate pyrophosphokinase family. Class I subfamily. In terms of assembly, homohexamer. Mg(2+) serves as cofactor.

It is found in the cytoplasm. It catalyses the reaction D-ribose 5-phosphate + ATP = 5-phospho-alpha-D-ribose 1-diphosphate + AMP + H(+). Its pathway is metabolic intermediate biosynthesis; 5-phospho-alpha-D-ribose 1-diphosphate biosynthesis; 5-phospho-alpha-D-ribose 1-diphosphate from D-ribose 5-phosphate (route I): step 1/1. In terms of biological role, involved in the biosynthesis of the central metabolite phospho-alpha-D-ribosyl-1-pyrophosphate (PRPP) via the transfer of pyrophosphoryl group from ATP to 1-hydroxyl of ribose-5-phosphate (Rib-5-P). In Streptococcus pyogenes serotype M3 (strain SSI-1), this protein is Putative ribose-phosphate pyrophosphokinase 2.